An 835-amino-acid chain; its full sequence is Protein VP3 (835 aa).

An N7-methyltransferase activity region spans residues 171–245 (KKIKERMTTS…KDTIKLKQER (75 aa)). A 2'-O-methyltransferase activity region spans residues 246–428 (WLGKRLSQFD…KNTKRFIPKG (183 aa)). The tract at residues 429–555 (VLYSYINNTI…NHLFILSGTN (127 aa)) is N7-methyltransferase activity. Residues 556–692 (KYFKLDQFAN…NYINKVYSIT (137 aa)) form a GTase/RTPase activity region. A 2'-5'-phosphodiesterase activity region spans residues 693-835 (YADDPNYFIG…KGDTVFDMTE (143 aa)). Catalysis depends on for 2'-5'-phosphodiesterase activity residues H718, T720, H797, and T799.

This sequence belongs to the rotavirus VP3 family. In terms of assembly, interacts with VP1. Interacts with VP2.

It is found in the virion. The enzyme catalyses a 5'-end diphospho-ribonucleoside in mRNA + GTP + H(+) = a 5'-end (5'-triphosphoguanosine)-ribonucleoside in mRNA + diphosphate. The catalysed reaction is a 5'-end (5'-triphosphoguanosine)-ribonucleoside in mRNA + S-adenosyl-L-methionine = a 5'-end (N(7)-methyl 5'-triphosphoguanosine)-ribonucleoside in mRNA + S-adenosyl-L-homocysteine. It carries out the reaction 5'-triphosphoadenylyl-(2'-&gt;5')-adenylyl-(2'-&gt;5')-adenosine + 2 H2O = 2 AMP + ATP + 2 H(+). Its function is as follows. Multifunctional enzyme involved in mRNA capping. Catalyzes the formation of the 5' cap structure on the viral plus-strand transcripts. Specifically binds to GTP and displays guanylyltransferase and methyltransferase activities. Has affinity for ssRNA but not for dsRNA. Capping activity is non-specific and caps RNAs that initiate with either a G or an A residue. Together with VP1 polymerase, forms a VP1-VP3 complex positioned near the channels situated at each of the five-fold vertices of the core. Following infection, the outermost layer of the virus is lost, leaving a double-layered particle (DLP) made up of the core and VP6 shell. VP1 then catalyzes the transcription of fully conservative plus-strand genomic RNAs that are capped by VP3 and extruded through the DLP's channels into the cytoplasm where they function as mRNAs for translation of viral proteins. DLPs probably have an RNA triphosphatase activity as well, whereas open cores do not. Functionally, counteracts the host innate immune response thanks to its phosphodiesterase that degrades the 5'-triphosphorylated, 2'-5' linked adenylate oligomers produced by the host cell IFN-inducible 2',5'-oligoadenylate synthetase (OAS). The host RNaseL is therefore not activated. In Rotavirus A (strain RVA/Cow/France/RF/1975/G6P6[1]) (RV-A), this protein is Protein VP3.